Consider the following 319-residue polypeptide: Methionyl-tRNA formyltransferase (319 aa).

Residue 112–115 (SILP) coordinates (6S)-5,6,7,8-tetrahydrofolate.

The protein belongs to the Fmt family.

It catalyses the reaction L-methionyl-tRNA(fMet) + (6R)-10-formyltetrahydrofolate = N-formyl-L-methionyl-tRNA(fMet) + (6S)-5,6,7,8-tetrahydrofolate + H(+). Its function is as follows. Attaches a formyl group to the free amino group of methionyl-tRNA(fMet). The formyl group appears to play a dual role in the initiator identity of N-formylmethionyl-tRNA by promoting its recognition by IF2 and preventing the misappropriation of this tRNA by the elongation apparatus. The sequence is that of Methionyl-tRNA formyltransferase from Shewanella denitrificans (strain OS217 / ATCC BAA-1090 / DSM 15013).